A 392-amino-acid polypeptide reads, in one-letter code: Gastricsin (392 aa).

Positions 1–16 are cleaved as a signal peptide; that stretch reads MKWMVVALLCLPLLEA. Positions 17–62 are cleaved as a propeptide — activation peptide; it reads SLLRVPLRKMKSIRETMKEQGVLKDFLKTHKYDPGQKYHFGNFGDY. The region spanning 76–389 is the Peptidase A1 domain; that stretch reads YFGEISIGTP…DMGNNKVGLA (314 aa). The active site involves D94. 2 disulfide bridges follow: C107/C112 and C270/C275. The active site involves D280. A disulfide bridge connects residues C314 and C347.

Belongs to the peptidase A1 family.

The protein localises to the secreted. It carries out the reaction More restricted specificity than pepsin A, but shows preferential cleavage at Tyr-|-Xaa bonds. High activity on hemoglobin.. Functionally, hydrolyzes a variety of proteins. The protein is Gastricsin (Pgc) of Rattus norvegicus (Rat).